Here is a 637-residue protein sequence, read N- to C-terminus: Serine protease Hayan (637 aa).

Residues M1–G26 form the signal peptide. The Clip domain occupies P31–C79. Disulfide bonds link C32/C78, C42/C68, and C48/C79. Disordered regions lie at residues F95–N137, K152–M178, Q216–N260, and L286–R365. The span at E125–E136 shows a compositional bias: basic and acidic residues. The span at P234–R244 shows a compositional bias: polar residues. The span at P245–N260 shows a compositional bias: low complexity. Positions E306–Q320 are enriched in basic and acidic residues. Over residues P321–L332 the composition is skewed to polar residues. 4 cysteine pairs are disulfide-bonded: C371–C497, C414–C430, C543–C567, and C578–C609. Residues I385–W632 form the Peptidase S1 domain. Residues H429 and D477 each act as charge relay system in the active site. The Charge relay system role is filled by S582.

This sequence belongs to the peptidase S1 family. CLIP subfamily.

It is found in the secreted. In terms of biological role, serine protease which, by converting prophenoloxidase 1 (PPO1) into its active form, plays an essential role in the melanization immune response to physical or septic wounding. May function in diverse PPO1-activating cascades that are negatively controlled by different serpin proteins; Spn27A and Spn28D in the hemolymph, and Spn28D and Spn77BA in the trachea. Also required in the systematic wound response by mediating the redox-dependent activation of the JNK cytoprotective cascade in neuronal tissues after integument wounding. The protein is Serine protease Hayan of Drosophila melanogaster (Fruit fly).